The chain runs to 422 residues: Serine--tRNA ligase (422 aa).

L-serine is bound at residue 229–231; it reads TAE. 260–262 contributes to the ATP binding site; that stretch reads RRE. L-serine is bound at residue Glu-283. 347–350 is a binding site for ATP; that stretch reads EISS. Residue Ser-383 participates in L-serine binding.

It belongs to the class-II aminoacyl-tRNA synthetase family. Type-1 seryl-tRNA synthetase subfamily. As to quaternary structure, homodimer. The tRNA molecule binds across the dimer.

The protein localises to the cytoplasm. The catalysed reaction is tRNA(Ser) + L-serine + ATP = L-seryl-tRNA(Ser) + AMP + diphosphate + H(+). The enzyme catalyses tRNA(Sec) + L-serine + ATP = L-seryl-tRNA(Sec) + AMP + diphosphate + H(+). It functions in the pathway aminoacyl-tRNA biosynthesis; selenocysteinyl-tRNA(Sec) biosynthesis; L-seryl-tRNA(Sec) from L-serine and tRNA(Sec): step 1/1. Functionally, catalyzes the attachment of serine to tRNA(Ser). Is also able to aminoacylate tRNA(Sec) with serine, to form the misacylated tRNA L-seryl-tRNA(Sec), which will be further converted into selenocysteinyl-tRNA(Sec). In Pelobacter propionicus (strain DSM 2379 / NBRC 103807 / OttBd1), this protein is Serine--tRNA ligase.